Here is a 469-residue protein sequence, read N- to C-terminus: Cysteine--tRNA ligase (469 aa).

C29 lines the Zn(2+) pocket. The 'HIGH' region signature appears at 31 to 41 (PTVYNYIHIGN). C210, H235, and E239 together coordinate Zn(2+). A 'KMSKS' region motif is present at residues 267–271 (KMSKS). K270 is an ATP binding site.

The protein belongs to the class-I aminoacyl-tRNA synthetase family. As to quaternary structure, monomer. It depends on Zn(2+) as a cofactor.

It localises to the cytoplasm. The catalysed reaction is tRNA(Cys) + L-cysteine + ATP = L-cysteinyl-tRNA(Cys) + AMP + diphosphate. This is Cysteine--tRNA ligase from Thermosipho melanesiensis (strain DSM 12029 / CIP 104789 / BI429).